The following is a 31-amino-acid chain: Delta-conotoxin-like ErVIA (31 aa).

A propeptide spanning residues 1 to 4 is cleaved from the precursor; sequence LNKR. 3 disulfide bridges follow: cysteine 5–cysteine 21, cysteine 12–cysteine 25, and cysteine 20–cysteine 29.

Belongs to the conotoxin O1 superfamily. Expressed by the venom duct.

The protein resides in the secreted. This toxin activates voltage-gated sodium channels. It shifts the voltage-dependence of activation to more hyperpolarized potentials but has only little effect on channel inactivation. It is active on Nav1.3/SCN3A (EC(50)=3.98 nM), Nav1.4/SCN4A (EC(50)=4.99 nM), Nav1.6/SCN8A (EC(50)=1.27 nM) and Nav1.7/SCN9A (EC(50)=2.42 nM) voltage-gated sodium channels. In vivo, it induces nocifensive or pain-like behaviors in mice when injected intraplantarly. This Conus eburneus (Ivory cone) protein is Delta-conotoxin-like ErVIA.